We begin with the raw amino-acid sequence, 255 residues long: MVKLTAELIEQAAQYTNAVRDRELDLRGYKIPVIENLGATLDQFDAIDFSDNEIRKLDGFPLLRRLKTLLVNNNRICRIGEGLDQALPCLTELILTNNSLVELGDLDPLASLKSLTYLSILRNPVTNKKHYRLYVIYKVPQVRVLDFQKVKLKERQEAEKMFKGKRGAQLAKDIARRSKTFNPGAGLPTDKKKGGPSAGDVEAIKNAIANASTLAEVERLKGLLQSGQIPGRERRSGPSDEGEEEIEDDTVTNGS.

LRR repeat units lie at residues 20–41, 43–64, 65–86, and 89–110; these read RDRE…GATL, QFDA…PLLR, RLKT…LDQA, and CLTE…DPLA. The LRRCT domain occupies 123-161; sequence NPVTNKKHYRLYVIYKVPQVRVLDFQKVKLKERQEAEKM. K172 is subject to N6-acetyllysine; alternate. K172 participates in a covalent cross-link: Glycyl lysine isopeptide (Lys-Gly) (interchain with G-Cter in SUMO2); alternate. Phosphoserine occurs at positions 178 and 197. The disordered stretch occupies residues 179–199; it reads KTFNPGAGLPTDKKKGGPSAG. A Glycyl lysine isopeptide (Lys-Gly) (interchain with G-Cter in SUMO2) cross-link involves residue K221. A disordered region spans residues 222–255; sequence GLLQSGQIPGRERRSGPSDEGEEEIEDDTVTNGS. A phosphoserine mark is found at S236 and S255. The span at 240–255 shows a compositional bias: acidic residues; sequence DEGEEEIEDDTVTNGS.

The protein belongs to the U2 small nuclear ribonucleoprotein A family. Identified in the spliceosome B complex. Identified in the spliceosome C complex. Found in a pre-mRNA splicing complex with SFRS4, SFRS5, SNRNP70, SNRPA1, SRRM1 and SRRM2. Found in a pre-mRNA exonic splicing enhancer (ESE) complex with SNRNP70, SNRPA1, SRRM1 and TRA2B. Contributes to the binding of stem loop IV of U2 snRNA with SNRPB2.

It localises to the nucleus. Its function is as follows. Involved in pre-mRNA splicing as component of the spliceosome. Associated with sn-RNP U2, where it contributes to the binding of stem loop IV of U2 snRNA. This is U2 small nuclear ribonucleoprotein A' (Snrpa1) from Mus musculus (Mouse).